Reading from the N-terminus, the 203-residue chain is FMN-dependent NADH:quinone oxidoreductase (203 aa).

FMN-binding positions include S9 and 15-17 (SKS).

The protein belongs to the azoreductase type 1 family. In terms of assembly, homodimer. Requires FMN as cofactor.

The catalysed reaction is 2 a quinone + NADH + H(+) = 2 a 1,4-benzosemiquinone + NAD(+). It catalyses the reaction N,N-dimethyl-1,4-phenylenediamine + anthranilate + 2 NAD(+) = 2-(4-dimethylaminophenyl)diazenylbenzoate + 2 NADH + 2 H(+). Quinone reductase that provides resistance to thiol-specific stress caused by electrophilic quinones. In terms of biological role, also exhibits azoreductase activity. Catalyzes the reductive cleavage of the azo bond in aromatic azo compounds to the corresponding amines. The sequence is that of FMN-dependent NADH:quinone oxidoreductase from Bordetella avium (strain 197N).